We begin with the raw amino-acid sequence, 346 residues long: Probable RNA methyltransferase PSPA7_3453 (346 aa).

The active-site Proton acceptor is E91. Positions 94-320 constitute a Radical SAM core domain; it reads LLPRGGLCVS…TKVRNSAGQD (227 aa). C101 and C325 form a disulfide bridge. [4Fe-4S] cluster-binding residues include C108, C112, and C115. S-adenosyl-L-methionine-binding positions include 153 to 154, S183, 206 to 208, and N282; these read GE and SLH. The S-methylcysteine intermediate role is filled by C325.

It belongs to the radical SAM superfamily. RlmN family. The cofactor is [4Fe-4S] cluster.

It is found in the cytoplasm. The protein is Probable RNA methyltransferase PSPA7_3453 of Pseudomonas paraeruginosa (strain DSM 24068 / PA7) (Pseudomonas aeruginosa (strain PA7)).